The sequence spans 273 residues: DNA repair protein RecO (273 aa).

A disordered region spans residues 250-273; that stretch reads NVGQNPSGKDDLNERRDVDGTGES. A compositionally biased stretch (basic and acidic residues) spans 257-273; that stretch reads GKDDLNERRDVDGTGES.

The protein belongs to the RecO family.

In terms of biological role, involved in DNA repair and RecF pathway recombination. The chain is DNA repair protein RecO from Desulfitobacterium hafniense (strain DSM 10664 / DCB-2).